Consider the following 576-residue polypeptide: MKASKYILPTEKENPADAVVASHRLMIRAGLVRKSSAGLYFYLPLGLKVLKKIEQIVREEMNSTGALEFDLPILTPSDFWEQSGRWSAMGKEMFRIQDRHDLSYALGPTHEESFSFLLKPLLKSYKDLPVNVYQIQTKFRDEIRPRFGVIRSREFIMKDAYSFHIDDSSLDDTYQAMRVAYRKIFDRCGLKTIPVQADSGSMGGSASEEFMVVSPIGEETLLLCNSCGYSSNSEKTPLILKKENSSAKFSEKKEISTPGKKTISEVSTLLGVSESETIKAVALKSEKKKILVFLRGDLELNLHKLHSLLKIADSEPMTDLEIRELGLIPGFISPIAPNDKIKVLYDRSLQKDFPYVVGSSKEDFHTQGFILEKEISGLPEFADVALAREGDLCPNCSFPLKAEKGIEVGHIFKLGDKYTKAFGIQVLDQNGKSKTLTMGCYGIGVNRTMATVIEQCNDEKGIFWPISIAPFEVSLVSIVKGEDQYFKIEEFYNVLMNEGIEVFWDDRDLGPGFKLKDSELIGFPIRITIGKKFFESGEISIYNRKKDQEDSFVFSGFDDLVARVESMRQELFTELR.

It belongs to the class-II aminoacyl-tRNA synthetase family. ProS type 1 subfamily. In terms of assembly, homodimer.

It is found in the cytoplasm. The enzyme catalyses tRNA(Pro) + L-proline + ATP = L-prolyl-tRNA(Pro) + AMP + diphosphate. Its function is as follows. Catalyzes the attachment of proline to tRNA(Pro) in a two-step reaction: proline is first activated by ATP to form Pro-AMP and then transferred to the acceptor end of tRNA(Pro). As ProRS can inadvertently accommodate and process non-cognate amino acids such as alanine and cysteine, to avoid such errors it has two additional distinct editing activities against alanine. One activity is designated as 'pretransfer' editing and involves the tRNA(Pro)-independent hydrolysis of activated Ala-AMP. The other activity is designated 'posttransfer' editing and involves deacylation of mischarged Ala-tRNA(Pro). The misacylated Cys-tRNA(Pro) is not edited by ProRS. In Leptospira interrogans serogroup Icterohaemorrhagiae serovar Lai (strain 56601), this protein is Proline--tRNA ligase.